We begin with the raw amino-acid sequence, 192 residues long: Casparian strip membrane protein 2 (192 aa).

Topologically, residues 1 to 31 are cytoplasmic; that stretch reads MTKDVVVEHGESSKAPLVAAPAASGVGRAAS. The chain crosses the membrane as a helical span at residues 32–52; the sequence is VADVFLRFLAIVGTIASAISM. Topologically, residues 53–79 are extracellular; sequence GTTNETLPFFTQFIQFEAKYSDLPSFT. The N-linked (GlcNAc...) asparagine glycan is linked to Asn56. A helical transmembrane segment spans residues 80–100; sequence FFVAANAVVCTYLVLSIPLSI. At 101–112 the chain is on the cytoplasmic side; the sequence is VHIVRPRARYSR. Residues 113-133 form a helical membrane-spanning segment; sequence LVLVFFDAAMLTLLTAGASAA. The Extracellular portion of the chain corresponds to 134–166; it reads AAIVYLAHKGNVRANWFAICQQFDSFCERISGS. A helical membrane pass occupies residues 167 to 187; the sequence is LIGSFAAMVLLIMLIFLSAFA. Over 188–192 the chain is Cytoplasmic; the sequence is LARRH.

It belongs to the Casparian strip membrane proteins (CASP) family. In terms of assembly, homodimer and heterodimers.

The protein resides in the cell membrane. Regulates membrane-cell wall junctions and localized cell wall deposition. Required for establishment of the Casparian strip membrane domain (CSD) and the subsequent formation of Casparian strips, a cell wall modification of the root endodermis that determines an apoplastic barrier between the intraorganismal apoplasm and the extraorganismal apoplasm and prevents lateral diffusion. This is Casparian strip membrane protein 2 from Panicum virgatum (Blackwell switchgrass).